A 346-amino-acid chain; its full sequence is Acrosin (346 aa).

The signal sequence occupies residues 1–19; the sequence is MALLLPLAVLLAACRPGHG. 6 disulfide bridges follow: C24–C146, C27–C154, C70–C86, C168–C240, C203–C219, and C230–C260. The region spanning 41 to 284 is the Peptidase S1 domain; sequence VVGGTEALHG…FYNWILLQVR (244 aa). Catalysis depends on H85, which acts as the Charge relay system. N128 is a glycosylation site (N-linked (GlcNAc...) asparagine). The Charge relay system role is filled by D134. An N-linked (GlcNAc...) asparagine glycan is attached at N204. The active-site Charge relay system is the S234. A propeptide spanning residues 266–346 is cleaved from the precursor; the sequence is PGIYTSTQHF…LLQSLWGSKA (81 aa).

The protein belongs to the peptidase S1 family. As to quaternary structure, heavy chain (catalytic) and a light chain linked by two disulfide bonds. In terms of processing, glycosylated.

The enzyme catalyses Preferential cleavage: Arg-|-Xaa, Lys-|-Xaa.. Its activity is regulated as follows. Inhibited by aprotinin, ovomucoid, soybean trypsin inhibitor, benzamidine, p-aminobenzamidine, and zinc ions. Activity also inhibited by a Kazal-type proteinase inhibitor. Serine protease of trypsin-like cleavage specificity. Synthesized in a zymogen form, proacrosin and stored in the acrosome. The chain is Acrosin from Meleagris gallopavo (Wild turkey).